Here is a 253-residue protein sequence, read N- to C-terminus: N-acetylmuramoyl-L-alanine amidase CwlM (253 aa).

In terms of domain architecture, MurNAc-LAA spans 4–172 (IFIDPGHGGS…IARGHANGLA (169 aa)). The 75-residue stretch at 179-253 (KNAAALYKVQ…AEFDTFIYQE (75 aa)) folds into the SPOR domain. 2 tandem repeats follow at residues 184-219 (LYKV…YRDS) and 220-253 (LYKV…IYQE). The segment at 184–253 (LYKVQIAAFR…AEFDTFIYQE (70 aa)) is 2 X 35 AA approximate tandem repeats.

This sequence belongs to the N-acetylmuramoyl-L-alanine amidase 3 family.

The protein resides in the secreted. The catalysed reaction is Hydrolyzes the link between N-acetylmuramoyl residues and L-amino acid residues in certain cell-wall glycopeptides.. Its function is as follows. Hydrolyzes the cell wall of M.luteus more efficiently than that of B.licheniformis and B.subtilis. The C-terminal region, including the repeats, determines substrate specificity. The polypeptide is N-acetylmuramoyl-L-alanine amidase CwlM (cwlM) (Bacillus licheniformis).